A 63-amino-acid chain; its full sequence is Large ribosomal subunit protein uL29 (63 aa).

Belongs to the universal ribosomal protein uL29 family.

This Azotobacter vinelandii (strain DJ / ATCC BAA-1303) protein is Large ribosomal subunit protein uL29.